Here is a 159-residue protein sequence, read N- to C-terminus: Ribosomal RNA large subunit methyltransferase H (159 aa).

S-adenosyl-L-methionine is bound by residues L76, G108, and 127–132 (FSKMTF).

Belongs to the RNA methyltransferase RlmH family. As to quaternary structure, homodimer.

The protein resides in the cytoplasm. The catalysed reaction is pseudouridine(1915) in 23S rRNA + S-adenosyl-L-methionine = N(3)-methylpseudouridine(1915) in 23S rRNA + S-adenosyl-L-homocysteine + H(+). Its function is as follows. Specifically methylates the pseudouridine at position 1915 (m3Psi1915) in 23S rRNA. The chain is Ribosomal RNA large subunit methyltransferase H from Exiguobacterium sp. (strain ATCC BAA-1283 / AT1b).